Consider the following 282-residue polypeptide: Rhomboid protease GlpG (282 aa).

The next 6 membrane-spanning stretches (helical) occupy residues 96 to 116 (AGPLTLTILLLNIVVYLWMQF), 144 to 164 (GLLHFSLLHIIFNLMWWWYLG), 176 to 196 (LFVIMIVSAVFSGWGQSLFSG), 197 to 217 (SHFGGLSGVVYALIGYVWLTG), 225 to 242 (IGVPRGLMAFSLFWLIVG), and 247 to 269 (FGLSIANAAHFSGLIIGLLMALW). Residue S203 is the Nucleophile of the active site. H256 is a catalytic residue.

It belongs to the peptidase S54 family.

Its subcellular location is the cell inner membrane. The enzyme catalyses Cleaves type-1 transmembrane domains using a catalytic dyad composed of serine and histidine that are contributed by different transmembrane domains.. Functionally, rhomboid-type serine protease that catalyzes intramembrane proteolysis. This Photorhabdus laumondii subsp. laumondii (strain DSM 15139 / CIP 105565 / TT01) (Photorhabdus luminescens subsp. laumondii) protein is Rhomboid protease GlpG.